The following is a 95-amino-acid chain: Aspartyl/glutamyl-tRNA(Asn/Gln) amidotransferase subunit C (95 aa).

This sequence belongs to the GatC family. Heterotrimer of A, B and C subunits.

The catalysed reaction is L-glutamyl-tRNA(Gln) + L-glutamine + ATP + H2O = L-glutaminyl-tRNA(Gln) + L-glutamate + ADP + phosphate + H(+). The enzyme catalyses L-aspartyl-tRNA(Asn) + L-glutamine + ATP + H2O = L-asparaginyl-tRNA(Asn) + L-glutamate + ADP + phosphate + 2 H(+). Allows the formation of correctly charged Asn-tRNA(Asn) or Gln-tRNA(Gln) through the transamidation of misacylated Asp-tRNA(Asn) or Glu-tRNA(Gln) in organisms which lack either or both of asparaginyl-tRNA or glutaminyl-tRNA synthetases. The reaction takes place in the presence of glutamine and ATP through an activated phospho-Asp-tRNA(Asn) or phospho-Glu-tRNA(Gln). The polypeptide is Aspartyl/glutamyl-tRNA(Asn/Gln) amidotransferase subunit C (Dinoroseobacter shibae (strain DSM 16493 / NCIMB 14021 / DFL 12)).